Here is a 256-residue protein sequence, read N- to C-terminus: Acetyl-coenzyme A carboxylase carboxyl transferase subunit alpha (256 aa).

Residues 1 to 236 enclose the CoA carboxyltransferase C-terminal domain; the sequence is MTDVSRVLKE…KANLIEQITS (236 aa).

The protein belongs to the AccA family. In terms of assembly, acetyl-CoA carboxylase is a heterohexamer composed of biotin carboxyl carrier protein (AccB), biotin carboxylase (AccC) and two subunits each of ACCase subunit alpha (AccA) and ACCase subunit beta (AccD).

It localises to the cytoplasm. It catalyses the reaction N(6)-carboxybiotinyl-L-lysyl-[protein] + acetyl-CoA = N(6)-biotinyl-L-lysyl-[protein] + malonyl-CoA. The protein operates within lipid metabolism; malonyl-CoA biosynthesis; malonyl-CoA from acetyl-CoA: step 1/1. Component of the acetyl coenzyme A carboxylase (ACC) complex. First, biotin carboxylase catalyzes the carboxylation of biotin on its carrier protein (BCCP) and then the CO(2) group is transferred by the carboxyltransferase to acetyl-CoA to form malonyl-CoA. This is Acetyl-coenzyme A carboxylase carboxyl transferase subunit alpha from Streptococcus pyogenes serotype M2 (strain MGAS10270).